An 86-amino-acid chain; its full sequence is MANIKSQEKRIRTNERRRLRNQSVKSSLRTAVRGFREALDAGDKDKAAELLVATSRKLDKAASKGVIHKNQAANKKSALSVALNKL.

Residues M1–R16 show a composition bias toward basic and acidic residues. Residues M1–K25 form a disordered region.

This sequence belongs to the bacterial ribosomal protein bS20 family.

In terms of biological role, binds directly to 16S ribosomal RNA. The chain is Small ribosomal subunit protein bS20 from Mycobacterium sp. (strain JLS).